A 295-amino-acid chain; its full sequence is Diaminopimelate epimerase (295 aa).

The substrate site is built by Asn11 and Asn67. The active-site Proton donor is the Cys76. Residues 77-78 (GN), Asn171, Asn210, and 228-229 (ER) contribute to the substrate site. Residue Cys237 is the Proton acceptor of the active site. 238 to 239 (GT) contributes to the substrate binding site.

Belongs to the diaminopimelate epimerase family. As to quaternary structure, homodimer.

It is found in the cytoplasm. The enzyme catalyses (2S,6S)-2,6-diaminopimelate = meso-2,6-diaminopimelate. It participates in amino-acid biosynthesis; L-lysine biosynthesis via DAP pathway; DL-2,6-diaminopimelate from LL-2,6-diaminopimelate: step 1/1. Its function is as follows. Catalyzes the stereoinversion of LL-2,6-diaminopimelate (L,L-DAP) to meso-diaminopimelate (meso-DAP), a precursor of L-lysine. This is Diaminopimelate epimerase from Methanocaldococcus jannaschii (strain ATCC 43067 / DSM 2661 / JAL-1 / JCM 10045 / NBRC 100440) (Methanococcus jannaschii).